The chain runs to 427 residues: Glutamate-1-semialdehyde 2,1-aminomutase 1 (427 aa).

Position 265 is an N6-(pyridoxal phosphate)lysine (Lys-265).

This sequence belongs to the class-III pyridoxal-phosphate-dependent aminotransferase family. HemL subfamily. In terms of assembly, homodimer. It depends on pyridoxal 5'-phosphate as a cofactor.

It localises to the cytoplasm. The enzyme catalyses (S)-4-amino-5-oxopentanoate = 5-aminolevulinate. It functions in the pathway porphyrin-containing compound metabolism; protoporphyrin-IX biosynthesis; 5-aminolevulinate from L-glutamyl-tRNA(Glu): step 2/2. The sequence is that of Glutamate-1-semialdehyde 2,1-aminomutase 1 from Lachnoclostridium phytofermentans (strain ATCC 700394 / DSM 18823 / ISDg) (Clostridium phytofermentans).